The sequence spans 155 residues: Ribonuclease H (155 aa).

Positions 1-142 (MLKQVEIFTD…CDELARAAAM (142 aa)) constitute an RNase H type-1 domain. Residues Asp-10, Glu-48, Asp-70, and Asp-134 each contribute to the Mg(2+) site.

It belongs to the RNase H family. Monomer. Mg(2+) serves as cofactor.

The protein localises to the cytoplasm. It carries out the reaction Endonucleolytic cleavage to 5'-phosphomonoester.. Endonuclease that specifically degrades the RNA of RNA-DNA hybrids. This Salmonella paratyphi C (strain RKS4594) protein is Ribonuclease H.